The following is a 208-amino-acid chain: Imidazoleglycerol-phosphate dehydratase (208 aa).

The interval methionine 1 to alanine 22 is disordered. Low complexity predominate over residues valine 7–glycine 19.

Belongs to the imidazoleglycerol-phosphate dehydratase family.

The protein localises to the cytoplasm. The enzyme catalyses D-erythro-1-(imidazol-4-yl)glycerol 3-phosphate = 3-(imidazol-4-yl)-2-oxopropyl phosphate + H2O. It participates in amino-acid biosynthesis; L-histidine biosynthesis; L-histidine from 5-phospho-alpha-D-ribose 1-diphosphate: step 6/9. This Anaeromyxobacter dehalogenans (strain 2CP-C) protein is Imidazoleglycerol-phosphate dehydratase.